We begin with the raw amino-acid sequence, 249 residues long: Probable transcriptional regulatory protein Tgr7_2237 (249 aa).

The protein belongs to the TACO1 family.

It is found in the cytoplasm. The chain is Probable transcriptional regulatory protein Tgr7_2237 from Thioalkalivibrio sulfidiphilus (strain HL-EbGR7).